The primary structure comprises 97 residues: MALTKIELKNSLIEQGLNKLEAKKVVEGFFEQIRVSLENGEDVKLSGFGNFELRDKSSRPGRNPKTGEAIPVSARRVVVFRPGQKLRSRVEKTKPKN.

Belongs to the bacterial histone-like protein family. In terms of assembly, heterodimer of an alpha and a beta chain.

Its function is as follows. This protein is one of the two subunits of integration host factor, a specific DNA-binding protein that functions in genetic recombination as well as in transcriptional and translational control. The chain is Integration host factor subunit alpha from Histophilus somni (strain 2336) (Haemophilus somnus).